We begin with the raw amino-acid sequence, 68 residues long: Protein SlyX homolog (68 aa).

Belongs to the SlyX family.

The sequence is that of Protein SlyX homolog from Pseudomonas syringae pv. tomato (strain ATCC BAA-871 / DC3000).